We begin with the raw amino-acid sequence, 283 residues long: Probable endonuclease 4 (283 aa).

9 residues coordinate Zn(2+): histidine 69, histidine 113, glutamate 148, aspartate 182, histidine 185, histidine 217, aspartate 230, histidine 232, and glutamate 262.

It belongs to the AP endonuclease 2 family. Zn(2+) is required as a cofactor.

It catalyses the reaction Endonucleolytic cleavage to 5'-phosphooligonucleotide end-products.. Endonuclease IV plays a role in DNA repair. It cleaves phosphodiester bonds at apurinic or apyrimidinic (AP) sites, generating a 3'-hydroxyl group and a 5'-terminal sugar phosphate. The polypeptide is Probable endonuclease 4 (Bifidobacterium longum (strain DJO10A)).